We begin with the raw amino-acid sequence, 491 residues long: AAA-ATPase At2g46620 (491 aa).

The helical transmembrane segment at 1-21 threads the bilayer; sequence MGILWDSFLLLLVSTFALFLV. 238 to 245 is an ATP binding site; that stretch reads GPSGTGKS. A disordered region spans residues 423–460; the sequence is GTGRRLLLENGSRKSTSEDVSDDMSGSLCGGGGGSSPA.

It belongs to the AAA ATPase family. BCS1 subfamily. Mg(2+) serves as cofactor.

The protein localises to the membrane. The catalysed reaction is ATP + H2O = ADP + phosphate + H(+). The sequence is that of AAA-ATPase At2g46620 from Arabidopsis thaliana (Mouse-ear cress).